A 145-amino-acid chain; its full sequence is Large ribosomal subunit protein mL43 (145 aa).

The protein belongs to the mitochondrion-specific ribosomal protein mL43 family. Component of the mitochondrial large ribosomal subunit (mt-LSU). Mature yeast 74S mitochondrial ribosomes consist of a small (37S) and a large (54S) subunit. The 37S small subunit contains a 15S ribosomal RNA (15S mt-rRNA) and at least 32 different proteins. The 54S large subunit contains a 21S rRNA (21S mt-rRNA) and at least 45 different proteins.

It is found in the mitochondrion. Its function is as follows. Component of the mitochondrial ribosome (mitoribosome), a dedicated translation machinery responsible for the synthesis of mitochondrial genome-encoded proteins, including at least some of the essential transmembrane subunits of the mitochondrial respiratory chain. The mitoribosomes are attached to the mitochondrial inner membrane and translation products are cotranslationally integrated into the membrane. Also has an extraribosomal function, being essential for mitochondrial genome integrity. May interact with MHR1 to take part in the mtDNA repair mechanism. The polypeptide is Large ribosomal subunit protein mL43 (mrpl51) (Schizosaccharomyces pombe (strain 972 / ATCC 24843) (Fission yeast)).